Consider the following 444-residue polypeptide: ATP-dependent protease ATPase subunit HslU (444 aa).

ATP contacts are provided by residues Ile18 and 60–65; that span reads GVGKTE. A disordered region spans residues 143 to 163; it reads WGEVENHDSHSSTRQAFRKKL. The ATP site is built by Asp257, Glu322, and Arg394.

This sequence belongs to the ClpX chaperone family. HslU subfamily. As to quaternary structure, a double ring-shaped homohexamer of HslV is capped on each side by a ring-shaped HslU homohexamer. The assembly of the HslU/HslV complex is dependent on binding of ATP.

Its subcellular location is the cytoplasm. Functionally, ATPase subunit of a proteasome-like degradation complex; this subunit has chaperone activity. The binding of ATP and its subsequent hydrolysis by HslU are essential for unfolding of protein substrates subsequently hydrolyzed by HslV. HslU recognizes the N-terminal part of its protein substrates and unfolds these before they are guided to HslV for hydrolysis. This chain is ATP-dependent protease ATPase subunit HslU, found in Haemophilus influenzae (strain 86-028NP).